The sequence spans 664 residues: Exoribonuclease 2 (664 aa).

One can recognise an RNB domain in the interval 193 to 521 (RIDMTHIPFV…INHRMLKALI (329 aa)). The S1 motif domain maps to 568–650 (QTLFTGEIFD…ENRSLVAKPT (83 aa)).

It belongs to the RNR ribonuclease family. RNase II subfamily.

It is found in the cytoplasm. The enzyme catalyses Exonucleolytic cleavage in the 3'- to 5'-direction to yield nucleoside 5'-phosphates.. In terms of biological role, involved in mRNA degradation. Hydrolyzes single-stranded polyribonucleotides processively in the 3' to 5' direction. In Vibrio vulnificus (strain CMCP6), this protein is Exoribonuclease 2.